The sequence spans 146 residues: Fluoride-specific ion channel FluC (146 aa).

The next 4 membrane-spanning stretches (helical) occupy residues 8 to 28 (FAIALGGSIGAVLRYLITLTV), 47 to 67 (LANLLGCCALGGLFQFSQALV), 91 to 111 (IGVLGSLTTFSTLIGETAVFA), and 121 to 141 (MLLGINVIAGWCLFWAAAAVV). The Na(+) site is built by glycine 95 and threonine 98.

The protein belongs to the fluoride channel Fluc/FEX (TC 1.A.43) family.

It is found in the cell inner membrane. The catalysed reaction is fluoride(in) = fluoride(out). Na(+) is not transported, but it plays an essential structural role and its presence is essential for fluoride channel function. Fluoride-specific ion channel. Important for reducing fluoride concentration in the cell, thus reducing its toxicity. This is Fluoride-specific ion channel FluC from Rhodopirellula baltica (strain DSM 10527 / NCIMB 13988 / SH1).